Consider the following 431-residue polypeptide: Nuclear receptor subfamily 1 group I member 2 (431 aa).

2 NR C4-type zinc fingers span residues 38-58 and 74-99; these read CRVCGDKANGYHFNVMTCEGC and CPFRKGTCEITRKTRRQCQACRLRKC. Positions 38–104 form a DNA-binding region, nuclear receptor; it reads CRVCGDKANG…RLRKCLESGM (67 aa). The Bipartite nuclear localization signal motif lies at 63–89; sequence RRAMKRNVRLRCPFRKGTCEITRKTRR. Residues 105-142 form a hinge region; sequence KKEMIMSDAAVEQRRALIKRKKREKIEAPPPGGQGLTE. The NR LBD domain maps to 143-430; that stretch reads EQQALIQELM…LMQELFSSTD (288 aa). Hyperforin is bound by residues S244 and 282 to 285; that span reads ILRF.

Belongs to the nuclear hormone receptor family. NR1 subfamily. In terms of assembly, heterodimer with RXRA. Interacts with NCOA1. Interacts (via domain NR LBD) with CRY1 and CRY2 in a ligand-dependent manner.

It is found in the nucleus. In terms of biological role, nuclear receptor that binds and is activated by a variety of endogenous and xenobiotic compounds. Transcription factor that activates the transcription of multiple genes involved in the metabolism and secretion of potentially harmful xenobiotics, endogenous compounds and drugs. Response to specific ligands is species-specific, due to differences in the ligand-binding domain. Activated by naturally occurring steroids, such as pregnenolone and progesterone. Binds to a response element in the promoters of the CYP3A4 and ABCB1/MDR1 genes. This Rattus norvegicus (Rat) protein is Nuclear receptor subfamily 1 group I member 2 (Nr1i2).